The sequence spans 489 residues: Carboxyl-terminal-processing peptidase 1, chloroplastic (489 aa).

Positions 1-20 (MRLLLPFSSPLSATSSPSTP) are enriched in low complexity. Residues 1–27 (MRLLLPFSSPLSATSSPSTPQFIPELP) are disordered. The region spanning 189–273 (FSRMSKYDIT…TFVVLKVKHG (85 aa)) is the PDZ domain. Catalysis depends on charge relay system residues Ser-403 and Lys-428.

The protein belongs to the peptidase S41A family.

It localises to the plastid. The protein localises to the chloroplast thylakoid lumen. The enzyme catalyses The enzyme shows specific recognition of a C-terminal tripeptide, Xaa-Yaa-Zaa, in which Xaa is preferably Ala or Leu, Yaa is preferably Ala or Tyr, and Zaa is preferably Ala, but then cleaves at a variable distance from the C-terminus. A typical cleavage is -Ala-Ala-|-Arg-Ala-Ala-Lys-Glu-Asn-Tyr-Ala-Leu-Ala-Ala.. Functionally, protease involved in the C-terminal processing of the chloroplastic D1 protein of photosystem II. This proteolytic processing is necessary to allow the light-driven assembly of the tetranuclear manganese cluster, which is responsible for photosynthetic water oxidation. This chain is Carboxyl-terminal-processing peptidase 1, chloroplastic (CTPA1), found in Arabidopsis thaliana (Mouse-ear cress).